The chain runs to 146 residues: Acidic phospholipase A2 2 (146 aa).

A signal peptide spans 1–21; the sequence is MNPAHLLILAAVCVSSLGASS. A propeptide spanning residues 22–27 is cleaved from the precursor; the sequence is NRPMPL. 7 disulfides stabilise this stretch: C38–C98, C53–C145, C55–C71, C70–C126, C77–C119, C87–C112, and C105–C117. 3 residues coordinate Ca(2+): Y54, G56, and G58. The active site involves H74. D75 serves as a coordination point for Ca(2+). Residue D120 is part of the active site.

This sequence belongs to the phospholipase A2 family. Group I subfamily. D49 sub-subfamily. Ca(2+) serves as cofactor. Expressed by the venom gland.

The protein resides in the secreted. It carries out the reaction a 1,2-diacyl-sn-glycero-3-phosphocholine + H2O = a 1-acyl-sn-glycero-3-phosphocholine + a fatty acid + H(+). Functionally, PLA2 catalyzes the calcium-dependent hydrolysis of the 2-acyl groups in 3-sn-phosphoglycerides. The sequence is that of Acidic phospholipase A2 2 from Naja kaouthia (Monocled cobra).